The sequence spans 719 residues: Penicillin-binding protein 1A (719 aa).

The interval 62 to 223 (LIADLGSERR…NQYDPYSHPE (162 aa)) is transglycosylase. The active-site Proton donor; for transglycosylase activity is the glutamate 91. The interval 297-611 (DVYTNVDQEA…RLTPLVGNGL (315 aa)) is transpeptidase. Serine 370 acts as the Acyl-ester intermediate; for transpeptidase activity in catalysis. Residues 652-719 (ARSTWSSPAP…QNQNPQPAQP (68 aa)) are disordered. Over residues 654–719 (STWSSPAPQQ…QNQNPQPAQP (66 aa)) the composition is skewed to low complexity.

This sequence in the N-terminal section; belongs to the glycosyltransferase 51 family. In the C-terminal section; belongs to the transpeptidase family. As to quaternary structure, interacts with MreC in the elongasome.

The protein resides in the secreted. It carries out the reaction [GlcNAc-(1-&gt;4)-Mur2Ac(oyl-L-Ala-gamma-D-Glu-L-Lys-D-Ala-D-Ala)](n)-di-trans,octa-cis-undecaprenyl diphosphate + beta-D-GlcNAc-(1-&gt;4)-Mur2Ac(oyl-L-Ala-gamma-D-Glu-L-Lys-D-Ala-D-Ala)-di-trans,octa-cis-undecaprenyl diphosphate = [GlcNAc-(1-&gt;4)-Mur2Ac(oyl-L-Ala-gamma-D-Glu-L-Lys-D-Ala-D-Ala)](n+1)-di-trans,octa-cis-undecaprenyl diphosphate + di-trans,octa-cis-undecaprenyl diphosphate + H(+). The enzyme catalyses Preferential cleavage: (Ac)2-L-Lys-D-Ala-|-D-Ala. Also transpeptidation of peptidyl-alanyl moieties that are N-acyl substituents of D-alanine.. The protein operates within cell wall biogenesis; peptidoglycan biosynthesis. In terms of biological role, cell wall formation. The chain is Penicillin-binding protein 1A (pbpA) from Streptococcus pneumoniae (strain ATCC BAA-255 / R6).